Consider the following 368-residue polypeptide: 3-dehydroquinate synthase (368 aa).

NAD(+) is bound by residues 69–74, 103–107, 127–128, K140, and K149; these read DGEAYK, GVIGD, and TT. Zn(2+) is bound by residues E182, H245, and H262.

Belongs to the sugar phosphate cyclases superfamily. Dehydroquinate synthase family. Co(2+) serves as cofactor. Requires Zn(2+) as cofactor. NAD(+) is required as a cofactor.

The protein localises to the cytoplasm. It carries out the reaction 7-phospho-2-dehydro-3-deoxy-D-arabino-heptonate = 3-dehydroquinate + phosphate. It participates in metabolic intermediate biosynthesis; chorismate biosynthesis; chorismate from D-erythrose 4-phosphate and phosphoenolpyruvate: step 2/7. Its function is as follows. Catalyzes the conversion of 3-deoxy-D-arabino-heptulosonate 7-phosphate (DAHP) to dehydroquinate (DHQ). This Pseudomonas paraeruginosa (strain DSM 24068 / PA7) (Pseudomonas aeruginosa (strain PA7)) protein is 3-dehydroquinate synthase.